The primary structure comprises 267 residues: Urease accessory protein UreD (267 aa).

It belongs to the UreD family. As to quaternary structure, ureD, UreF and UreG form a complex that acts as a GTP-hydrolysis-dependent molecular chaperone, activating the urease apoprotein by helping to assemble the nickel containing metallocenter of UreC. The UreE protein probably delivers the nickel.

The protein localises to the cytoplasm. Its function is as follows. Required for maturation of urease via the functional incorporation of the urease nickel metallocenter. The chain is Urease accessory protein UreD from Synechococcus sp. (strain JA-2-3B'a(2-13)) (Cyanobacteria bacterium Yellowstone B-Prime).